The chain runs to 265 residues: HUWE1-associated protein modifying stress responses (265 aa).

Disordered regions lie at residues 1 to 22, 145 to 170, 195 to 218, and 240 to 265; these read MEDKKEEGESEIQEHGPEHWFS, RNSRAPPRLTVVSPNRATPTETGSSV, VRSSTPGSPTHVSGSSNTGRRRNG, and GTRKRSSAQCGDVITDSPTHKRNRMI. Polar residues-rich tracts occupy residues 156–170 and 195–212; these read VSPNRATPTETGSSV and VRSSTPGSPTHVSGSSNT.

This sequence belongs to the TAPR1 family. In terms of assembly, oligomer.

The protein resides in the nucleus. Its subcellular location is the cytoplasm. In terms of biological role, acts as a central player within a network of stress response pathways promoting cellular adaptability. Functions as a negative regulator of TP53/P53 in the cellular response to telomere erosion and probably also DNA damage. This Xenopus laevis (African clawed frog) protein is HUWE1-associated protein modifying stress responses.